Consider the following 578-residue polypeptide: MLDSKLRFFLQRCVVLEQAKQVHAQLVVNRYNHLEPILVHQTLHFTKEFSRNIVTYVKRILKGFNGHDSFSWGCLVRFLSQHRKFKETVDVYIDMHNSGIPPSSHAVTSVLRACGKMENMVDGKPIHAQALKNGLCGCVYVQTGLVGLYSRLGYIELAKKAFDDIAEKNTVSWNSLLHGYLESGELDEARRVFDKIPEKDAVSWNLIISSYAKKGDMGNACSLFSAMPLKSPASWNILIGGYVNCREMKLARTYFDAMPQKNGVSWITMISGYTKLGDVQSAEELFRLMSKKDKLVYDAMIACYTQNGKPKDALKLFAQMLERNSYIQPDEITLSSVVSANSQLGNTSFGTWVESYITEHGIKIDDLLSTSLIDLYMKGGDFAKAFKMFSNLNKKDTVSYSAMIMGCGINGMATEANSLFTAMIEKKIPPNVVTFTGLLSAYSHSGLVQEGYKCFNSMKDHNLEPSADHYGIMVDMLGRAGRLEEAYELIKSMPMQPNAGVWGALLLASGLHNNVEFGEIACSHCVKLETDPTGYLSHLAMIYSSVGRWDDARTVRDSIKEKKLCKTLGCSWVEGSYH.

13 PPR repeats span residues 68–102 (DSFSWGCLVRFLSQHRKFKETVDVYIDMHNSGIPP), 103–137 (SSHAVTSVLRACGKMENMVDGKPIHAQALKNGLCG), 138–168 (CVYVQTGLVGLYSRLGYIELAKKAFDDIAEK), 169–203 (NTVSWNSLLHGYLESGELDEARRVFDKIPEKDAVS), 204–230 (WNLIISSYAKKGDMGNACSLFSAMPLK), 231–261 (SPASWNILIGGYVNCREMKLARTYFDAMPQK), 262–292 (NGVSWITMISGYTKLGDVQSAEELFRLMSKK), 293–327 (DKLVYDAMIACYTQNGKPKDALKLFAQMLERNSYI), 330–364 (DEITLSSVVSANSQLGNTSFGTWVESYITEHGIKI), 365–395 (DDLLSTSLIDLYMKGGDFAKAFKMFSNLNKK), 396–430 (DTVSYSAMIMGCGINGMATEANSLFTAMIEKKIPP), 431–465 (NVVTFTGLLSAYSHSGLVQEGYKCFNSMKDHNLEP), and 466–496 (SADHYGIMVDMLGRAGRLEEAYELIKSMPMQ). Residues 501–576 (VWGALLLASG…TLGCSWVEGS (76 aa)) are type E motif.

Belongs to the PPR family. PCMP-E subfamily.

This chain is Pentatricopeptide repeat-containing protein At4g22760 (PCMP-E6), found in Arabidopsis thaliana (Mouse-ear cress).